We begin with the raw amino-acid sequence, 65 residues long: Photosystem II reaction center protein J (65 aa).

A helical membrane pass occupies residues 35-55 (LWLVATAGGTAVIFVLGIFFY).

The protein belongs to the PsbJ family. In terms of assembly, PSII is composed of 1 copy each of membrane proteins PsbA, PsbB, PsbC, PsbD, PsbE, PsbF, PsbH, PsbI, PsbJ, PsbK, PsbL, PsbM, PsbT, PsbX, PsbY, Psb30/Ycf12, peripheral proteins PsbO, CyanoQ (PsbQ), PsbU, PsbV and a large number of cofactors. It forms dimeric complexes.

The protein localises to the cellular thylakoid membrane. Functionally, one of the components of the core complex of photosystem II (PSII). PSII is a light-driven water:plastoquinone oxidoreductase that uses light energy to abstract electrons from H(2)O, generating O(2) and a proton gradient subsequently used for ATP formation. It consists of a core antenna complex that captures photons, and an electron transfer chain that converts photonic excitation into a charge separation. The sequence is that of Photosystem II reaction center protein J from Prochlorococcus marinus (strain NATL2A).